The following is a 276-amino-acid chain: Undecaprenyl-diphosphatase 1 (276 aa).

8 helical membrane-spanning segments follow: residues 1–21 (MSLW…LFPV), 44–64 (QLLP…LWYF), 87–107 (GHLM…GLLL), 114–134 (VFHD…LLWL), 150–170 (LTFK…IPGF), 190–210 (AAEF…LLEL), 222–242 (DALL…RFLM), and 251–271 (LASF…WFMF).

Belongs to the UppP family.

Its subcellular location is the cell inner membrane. It catalyses the reaction di-trans,octa-cis-undecaprenyl diphosphate + H2O = di-trans,octa-cis-undecaprenyl phosphate + phosphate + H(+). Its function is as follows. Catalyzes the dephosphorylation of undecaprenyl diphosphate (UPP). Confers resistance to bacitracin. This is Undecaprenyl-diphosphatase 1 from Burkholderia pseudomallei (strain 1106a).